We begin with the raw amino-acid sequence, 207 residues long: dTTP/UTP pyrophosphatase (207 aa).

Asp79 acts as the Proton acceptor in catalysis.

It belongs to the Maf family. YhdE subfamily. The cofactor is a divalent metal cation.

Its subcellular location is the cytoplasm. The catalysed reaction is dTTP + H2O = dTMP + diphosphate + H(+). It carries out the reaction UTP + H2O = UMP + diphosphate + H(+). Functionally, nucleoside triphosphate pyrophosphatase that hydrolyzes dTTP and UTP. May have a dual role in cell division arrest and in preventing the incorporation of modified nucleotides into cellular nucleic acids. This chain is dTTP/UTP pyrophosphatase, found in Nitrobacter winogradskyi (strain ATCC 25391 / DSM 10237 / CIP 104748 / NCIMB 11846 / Nb-255).